The sequence spans 294 residues: Ribosomal protein L11 methyltransferase (294 aa).

The S-adenosyl-L-methionine site is built by Thr145, Gly166, Asp188, and Asn230.

Belongs to the methyltransferase superfamily. PrmA family.

It is found in the cytoplasm. It catalyses the reaction L-lysyl-[protein] + 3 S-adenosyl-L-methionine = N(6),N(6),N(6)-trimethyl-L-lysyl-[protein] + 3 S-adenosyl-L-homocysteine + 3 H(+). Functionally, methylates ribosomal protein L11. The polypeptide is Ribosomal protein L11 methyltransferase (Glaesserella parasuis serovar 5 (strain SH0165) (Haemophilus parasuis)).